A 419-amino-acid chain; its full sequence is Metacaspase-1B (419 aa).

The segment at 1–109 (MYHPNYNYPP…PPMEAQQFGK (109 aa)) is disordered. Pro residues predominate over residues 33–50 (SPPPPQPYYSNGYPPPSQ). The segment covering 51–66 (SPHSYSPPQYPPHGQY) has biased composition (low complexity). Over residues 82-93 (QYRSYHSHSPSW) the composition is skewed to polar residues. Catalysis depends on residues His210 and Cys266.

This sequence belongs to the peptidase C14B family.

Its function is as follows. Involved in cell death (apoptosis). The chain is Metacaspase-1B (casB) from Aspergillus oryzae (strain ATCC 42149 / RIB 40) (Yellow koji mold).